A 537-amino-acid polypeptide reads, in one-letter code: Formimidoyltransferase-cyclodeaminase (537 aa).

Residues M1–F181 form a formiminotransferase N-subdomain region. The active-site For formimidoyltransferase activity is the H82. A folate-binding site is contributed by G163–G172. The segment at L182 to V326 is formiminotransferase C-subdomain. Residues Q327–P335 form a linker region. The cyclodeaminase/cyclohydrolase stretch occupies residues L336–E537. Catalysis depends on D413, which acts as the For cyclodeaminase activity.

The protein in the C-terminal section; belongs to the cyclodeaminase/cyclohydrolase family. This sequence in the N-terminal section; belongs to the formiminotransferase family. As to quaternary structure, homooctamer, including four polyglutamate binding sites. The subunits are arranged as a tetramer of dimers, and form a planar ring-shaped structure.

It localises to the cytoplasm. The protein localises to the cytosol. The protein resides in the golgi apparatus. Its subcellular location is the cytoskeleton. It is found in the microtubule organizing center. It localises to the centrosome. The protein localises to the centriole. It catalyses the reaction 5-formimidoyltetrahydrofolate + L-glutamate = N-formimidoyl-L-glutamate + (6S)-5,6,7,8-tetrahydrofolate. The catalysed reaction is 5-formimidoyltetrahydrofolate + 2 H(+) = (6R)-5,10-methenyltetrahydrofolate + NH4(+). It participates in amino-acid degradation; L-histidine degradation into L-glutamate; L-glutamate from N-formimidoyl-L-glutamate (transferase route): step 1/1. In terms of biological role, folate-dependent enzyme, that displays both transferase and deaminase activity. Serves to channel one-carbon units from formiminoglutamate to the folate pool. The polypeptide is Formimidoyltransferase-cyclodeaminase (ftcd) (Dictyostelium discoideum (Social amoeba)).